Consider the following 452-residue polypeptide: 1,3-beta-glucanosyltransferase gel1 (452 aa).

A signal peptide spans 1–19 (MKASAVTAALAVGASTVLA). An intrachain disulfide couples Cys-71 to Cys-100. Residues Tyr-89, Asn-159, Glu-160, Asp-201, and Arg-206 each coordinate (1,3-beta-D-glucosyl)n. Glu-160 acts as the Proton donor in catalysis. Intrachain disulfides connect Cys-215–Cys-345 and Cys-233–Cys-264. Asn-249 carries an N-linked (GlcNAc...) asparagine glycan. Residue Glu-261 is the Nucleophile of the active site. (1,3-beta-D-glucosyl)n is bound at residue Tyr-292. Residues 325-340 (EKTSNPSGDGNYNKTG) show a composition bias toward polar residues. The tract at residues 325–419 (EKTSNPSGDG…SGTSTSSKGA (95 aa)) is disordered. An N-linked (GlcNAc...) asparagine glycan is attached at Asn-337. The span at 393–419 (STATAEPGSGSATGSSSSGTSTSSKGA) shows a compositional bias: low complexity. The GPI-like-anchor amidated alanine moiety is linked to residue Ala-419. Residues 420–452 (AAGLTVPSLTMAPVVVGAVTLLSTVFGAGLVLL) constitute a propeptide, removed in mature form.

The protein belongs to the glycosyl hydrolase 72 family. The GPI-like anchor contains a phosphoceramide lipid group.

It localises to the cell membrane. Functionally, splits internally a 1,3-beta-glucan molecule and transfers the newly generated reducing end (the donor) to the non-reducing end of another 1,3-beta-glucan molecule (the acceptor) forming a 1,3-beta linkage, resulting in the elongation of 1,3-beta-glucan chains in the cell wall. Involved in cell wall morphogenesis. This Aspergillus fumigatus (strain ATCC MYA-4609 / CBS 101355 / FGSC A1100 / Af293) (Neosartorya fumigata) protein is 1,3-beta-glucanosyltransferase gel1 (gel1).